A 295-amino-acid chain; its full sequence is uncharacterized protein (295 aa).

A signal peptide spans 1 to 19 (MHKLLLIITVFSTFNVAQA).

This is an uncharacterized protein from Rickettsia typhi (strain ATCC VR-144 / Wilmington).